A 210-amino-acid chain; its full sequence is Ribonuclease HII (210 aa).

An RNase H type-2 domain is found at 18-208 (YPVAGIDEAG…VNDIISQTKL (191 aa)). Positions 24, 25, and 116 each coordinate a divalent metal cation.

This sequence belongs to the RNase HII family. It depends on Mn(2+) as a cofactor. Mg(2+) is required as a cofactor.

Its subcellular location is the cytoplasm. It carries out the reaction Endonucleolytic cleavage to 5'-phosphomonoester.. Endonuclease that specifically degrades the RNA of RNA-DNA hybrids. In Endomicrobium trichonymphae, this protein is Ribonuclease HII.